A 156-amino-acid chain; its full sequence is SsrA-binding protein (156 aa).

Belongs to the SmpB family.

It localises to the cytoplasm. Functionally, required for rescue of stalled ribosomes mediated by trans-translation. Binds to transfer-messenger RNA (tmRNA), required for stable association of tmRNA with ribosomes. tmRNA and SmpB together mimic tRNA shape, replacing the anticodon stem-loop with SmpB. tmRNA is encoded by the ssrA gene; the 2 termini fold to resemble tRNA(Ala) and it encodes a 'tag peptide', a short internal open reading frame. During trans-translation Ala-aminoacylated tmRNA acts like a tRNA, entering the A-site of stalled ribosomes, displacing the stalled mRNA. The ribosome then switches to translate the ORF on the tmRNA; the nascent peptide is terminated with the 'tag peptide' encoded by the tmRNA and targeted for degradation. The ribosome is freed to recommence translation, which seems to be the essential function of trans-translation. In Paracoccus denitrificans (strain Pd 1222), this protein is SsrA-binding protein.